The sequence spans 339 residues: Putative adenosine/adenine deaminase (339 aa).

Residues His16, His18, and His200 each contribute to the Zn(2+) site. Substrate is bound at residue His18. The active-site Proton donor is the Glu203. Asp281 is a Zn(2+) binding site. Asp282 is a binding site for substrate.

It belongs to the metallo-dependent hydrolases superfamily. Adenosine and AMP deaminases family. Zn(2+) is required as a cofactor.

Functionally, putative nucleoside deaminase. May catalyze the hydrolytic deamination of adenosine or some similar substrate and play a role in purine metabolism. This Streptomyces virginiae (Streptomyces cinnamonensis) protein is Putative adenosine/adenine deaminase.